The primary structure comprises 197 residues: Holliday junction branch migration complex subunit RuvA (197 aa).

Residues 1–64 (MYEYIKGKYI…EDFIGVYGFL (64 aa)) are domain I. Positions 65-144 (TKDELSMFKL…DILEEDDEQI (80 aa)) are domain II. The tract at residues 145–149 (INKVT) is flexible linker. Residues 149-197 (TDDKKVLEAVAALVTLGYSEKEANKVINSCDKNNSLEQIIKEALKYLMK) form a domain III region.

This sequence belongs to the RuvA family. Homotetramer. Forms an RuvA(8)-RuvB(12)-Holliday junction (HJ) complex. HJ DNA is sandwiched between 2 RuvA tetramers; dsDNA enters through RuvA and exits via RuvB. An RuvB hexamer assembles on each DNA strand where it exits the tetramer. Each RuvB hexamer is contacted by two RuvA subunits (via domain III) on 2 adjacent RuvB subunits; this complex drives branch migration. In the full resolvosome a probable DNA-RuvA(4)-RuvB(12)-RuvC(2) complex forms which resolves the HJ.

The protein localises to the cytoplasm. Its function is as follows. The RuvA-RuvB-RuvC complex processes Holliday junction (HJ) DNA during genetic recombination and DNA repair, while the RuvA-RuvB complex plays an important role in the rescue of blocked DNA replication forks via replication fork reversal (RFR). RuvA specifically binds to HJ cruciform DNA, conferring on it an open structure. The RuvB hexamer acts as an ATP-dependent pump, pulling dsDNA into and through the RuvAB complex. HJ branch migration allows RuvC to scan DNA until it finds its consensus sequence, where it cleaves and resolves the cruciform DNA. This is Holliday junction branch migration complex subunit RuvA from Clostridium botulinum (strain Kyoto / Type A2).